Consider the following 696-residue polypeptide: Spermatogenesis-associated protein 21 (696 aa).

Disordered regions lie at residues 1–301 (MDNR…AAGT) and 329–386 (LKAR…SVPT). Residues 67–86 (KGPRYRDTFKEGPSELRTQE) show a composition bias toward basic and acidic residues. A compositionally biased stretch (polar residues) spans 96 to 116 (KQSSWVPQEGSQELQAGQDQS). A compositionally biased stretch (basic and acidic residues) spans 195-209 (GDKRPKEADVPHIRP). The segment covering 223-235 (DSSQEAMPPTSTV) has biased composition (polar residues). Over residues 275 to 287 (EVRDIGERREPDR) the composition is skewed to basic and acidic residues. Low complexity-rich tracts occupy residues 288–297 (VQQQPQKPVV) and 339–366 (SPRT…SGPS). A coiled-coil region spans residues 424 to 451 (EPEEQSLQKLYQNREKSEEQLTLKQEEA). An EF-hand domain is found at 481–516 (VTPAQVEDALMSADVNGDGHVDFKDFLAVMTDTRRF). 5 residues coordinate Ca(2+): aspartate 494, asparagine 496, aspartate 498, histidine 500, and aspartate 505. Positions 646–696 (KPTNHYVQDQCTTPGLAPDIRSPFFQSRSQGNREHNSDSRKWPSSVPSRTH) are disordered. Basic and acidic residues predominate over residues 676-686 (GNREHNSDSRK).

Involved in the differentiation of haploid spermatids. The chain is Spermatogenesis-associated protein 21 (SPATA21) from Macaca fascicularis (Crab-eating macaque).